The sequence spans 239 residues: tRNA (guanine-N(7)-)-methyltransferase (239 aa).

Positions 69, 94, 121, and 144 each coordinate S-adenosyl-L-methionine. The active site involves Asp144. Lys148 is a substrate binding site. The interval 150 to 155 (RHNKRR) is interaction with RNA. Residues Asp180 and 217–220 (TKFE) each bind substrate.

It belongs to the class I-like SAM-binding methyltransferase superfamily. TrmB family. Monomer.

The catalysed reaction is guanosine(46) in tRNA + S-adenosyl-L-methionine = N(7)-methylguanosine(46) in tRNA + S-adenosyl-L-homocysteine. It participates in tRNA modification; N(7)-methylguanine-tRNA biosynthesis. Functionally, catalyzes the formation of N(7)-methylguanine at position 46 (m7G46) in tRNA. The polypeptide is tRNA (guanine-N(7)-)-methyltransferase (Salmonella choleraesuis (strain SC-B67)).